The chain runs to 1053 residues: Phosphoenolpyruvate carboxylase (1053 aa).

Histidine 246 is a catalytic residue. Positions 461-473 are enriched in basic and acidic residues; that stretch reads RNTRLQQQQEKDP. The tract at residues 461–480 is disordered; it reads RNTRLQQQQEKDPTTPLPEY. Lysine 699 is a catalytic residue.

The protein belongs to the PEPCase type 1 family. Mg(2+) serves as cofactor.

It carries out the reaction oxaloacetate + phosphate = phosphoenolpyruvate + hydrogencarbonate. In terms of biological role, forms oxaloacetate, a four-carbon dicarboxylic acid source for the tricarboxylic acid cycle. This is Phosphoenolpyruvate carboxylase (ppc) from Synechococcus sp. (strain ATCC 27144 / PCC 6301 / SAUG 1402/1) (Anacystis nidulans).